A 683-amino-acid polypeptide reads, in one-letter code: Synaptic vesicle glycoprotein 2B (683 aa).

Over residues 1–10 the composition is skewed to basic and acidic residues; it reads MDDYRYRDNY. Positions 1–72 are disordered; it reads MDDYRYRDNY…QTKMAPSRAD (72 aa). Topologically, residues 1–110 are cytoplasmic; that stretch reads MDDYRYRDNY…ECGHGRFQWT (110 aa). Residue Ser33 is modified to Phosphoserine. Thr36 bears the Phosphothreonine mark. The helical transmembrane segment at 111–131 threads the bilayer; the sequence is LFFVLVLALMADGVEVFVVSF. Residues 132–148 are Extracellular-facing; it reads ALPSAEKDMCLSSSKKG. Residues 149-169 form a helical membrane-spanning segment; the sequence is MLGLIVYLGMMAGAFILGGLA. Topologically, residues 170–182 are cytoplasmic; sequence DKLGRKKVLSMSL. Residues 183–203 form a helical membrane-spanning segment; the sequence is AINASFASLSSFVQGYGAFLF. Topologically, residues 204–205 are extracellular; it reads CR. Residues 206–226 form a helical membrane-spanning segment; sequence LISGIGIGGSLPIVFAYFSEF. Residues 227–237 are Cytoplasmic-facing; sequence LSREKRGEHLS. A helical membrane pass occupies residues 238 to 258; that stretch reads WLGIFWMTGGIYASAMAWSII. Topologically, residues 259–277 are extracellular; the sequence is PHYGWGFSMGTNYHFHSWR. A helical membrane pass occupies residues 278–298; it reads VFVIVCALPATVSMVALKFMP. The Cytoplasmic portion of the chain corresponds to 299 to 390; sequence ESPRFLLEMG…CVMGPYRMNT (92 aa). A helical membrane pass occupies residues 391-411; it reads LILAVVWFTMALSYYGLTVWF. Topologically, residues 412–535 are extracellular; sequence PDMIRYFQDE…CHMDFEEDND (124 aa). A Phosphotyrosine modification is found at Tyr423. N-linked (GlcNAc...) asparagine glycans are attached at residues Asn441, Asn491, and Asn516. Residues 536–556 traverse the membrane as a helical segment; it reads FLIYLVSFLGSLSVLPGNIIS. Over 557 to 565 the chain is Cytoplasmic; sequence ALLMDRIGR. Residues 566–586 traverse the membrane as a helical segment; the sequence is LKMIGGSMLISAVCCFFLFFG. The Extracellular portion of the chain corresponds to 587 to 592; that stretch reads NSESAM. A helical membrane pass occupies residues 593–613; sequence IGWQCLFCGTSIAAWNALDVI. The Cytoplasmic portion of the chain corresponds to 614-626; that stretch reads TVELYPTNQRATA. The helical transmembrane segment at 627–649 threads the bilayer; it reads FGILNGLCKLGAILGNTIFASFV. Topologically, residues 650-653 are extracellular; sequence GITK. Residues 654 to 672 form a helical membrane-spanning segment; that stretch reads VVPILLAAASLVGGGLVAL. The Cytoplasmic segment spans residues 673–683; sequence RLPETREQVLM.

The protein belongs to the major facilitator superfamily. In terms of assembly, interacts with SYT1 in a calcium-independent manner. Forms a complex with SYT1, syntaxin-1 and SNAP25. As to quaternary structure, (Microbial infection) Interacts with C.botulinum neurotoxin type A1 and type A2 (BoNT/A, botA). Interaction is improved by glycosylation of SV2. (Microbial infection) Interacts with C.botulinum neurotoxin type D (BoNT/D, botD). In terms of assembly, (Microbial infection) Interacts with C.botulinum neurotoxin type E (BoNT/E). Interaction requires glycosylation of SV2 proteins. As to quaternary structure, (Microbial infection) Interacts with C.botulinum neurotoxin type F (BoNT/F). Interaction requires glycosylation of SV2 proteins. N-glycosylated. In terms of processing, the N-terminal cytoplasmic domain is phosphorylated by CK1. As to expression, widely expressed throughout the brain. Specifically expressed by pinealocytes in the pineal gland. Also detected in testis (at protein level). Specifically expressed in neural tissues. Expressed in the spinal cord and in all brain regions with a stronger expression in hippocampus and cortex.

It is found in the cytoplasmic vesicle. Its subcellular location is the secretory vesicle. It localises to the synaptic vesicle membrane. The protein localises to the acrosome. Functionally, probably plays a role in the control of regulated secretion in neural and endocrine cells. (Microbial infection) Receptor for C.botulinum neurotoxin type A (BoNT/A, botA); the toxin binds via extracellular loop 4. Restores uptake of BoNT/A in mouse and rat cells that are deleted for SV2 receptor. Glycosylation of SV2B is not essential for receptor activity, but enhances the interaction. Also serves as a receptor for the closely related C.botulinum neurotoxin type A2; glycosylation is not essential but enhances the interaction. In terms of biological role, (Microbial infection) Possible receptor for C.botulinum neurotoxin type D (BoNT/D, botD); BoNT/D does not bind to extracellular loop 4 as do BoNT/A and BoNT/E. Another group does not find a convincing interaction with SV2. Its function is as follows. (Microbial infection) Receptor for C.botulinum neurotoxin type E (BoNT/E); the toxin probably binds via extracellular loop 4. Restores uptake of BoNT/E in mouse cells that are deleted for SV2 receptor. Glycosylation of SV2B is not essential for receptor activity, but enhances the interaction. Functionally, (Microbial infection) Receptor for C.botulinum neurotoxin type F (BoNT/F); binding requires glycosylation of this protein. The sequence is that of Synaptic vesicle glycoprotein 2B (Sv2b) from Rattus norvegicus (Rat).